We begin with the raw amino-acid sequence, 391 residues long: Protein-glutamate methylesterase/protein-glutamine glutaminase (391 aa).

One can recognise a Response regulatory domain in the interval 4-121; that stretch reads KVLVVDDSSF…ARNNEDAIKL (118 aa). Position 55 is a 4-aspartylphosphate (D55). A CheB-type methylesterase domain is found at 197–391; it reads SGKHYQLVAI…IRLKTEVGCG (195 aa). Residues S209, H236, and D333 contribute to the active site.

It belongs to the CheB family. Post-translationally, phosphorylated by CheA. Phosphorylation of the N-terminal regulatory domain activates the methylesterase activity.

Its subcellular location is the cytoplasm. The enzyme catalyses [protein]-L-glutamate 5-O-methyl ester + H2O = L-glutamyl-[protein] + methanol + H(+). It carries out the reaction L-glutaminyl-[protein] + H2O = L-glutamyl-[protein] + NH4(+). Its function is as follows. Involved in chemotaxis. Part of a chemotaxis signal transduction system that modulates chemotaxis in response to various stimuli. Catalyzes the demethylation of specific methylglutamate residues introduced into the chemoreceptors (methyl-accepting chemotaxis proteins or MCP) by CheR. Also mediates the irreversible deamidation of specific glutamine residues to glutamic acid. The polypeptide is Protein-glutamate methylesterase/protein-glutamine glutaminase (Pseudoalteromonas translucida (strain TAC 125)).